The sequence spans 368 residues: Quinolinate synthase (368 aa).

Residues histidine 46 and serine 63 each contribute to the iminosuccinate site. Cysteine 110 is a [4Fe-4S] cluster binding site. Iminosuccinate contacts are provided by residues 141 to 143 (YVN) and serine 162. Cysteine 230 is a [4Fe-4S] cluster binding site. Iminosuccinate is bound by residues 256-258 (HPE) and threonine 273. Residue cysteine 320 participates in [4Fe-4S] cluster binding.

It belongs to the quinolinate synthase family. Type 3 subfamily. [4Fe-4S] cluster serves as cofactor.

It is found in the cytoplasm. It catalyses the reaction iminosuccinate + dihydroxyacetone phosphate = quinolinate + phosphate + 2 H2O + H(+). It functions in the pathway cofactor biosynthesis; NAD(+) biosynthesis; quinolinate from iminoaspartate: step 1/1. Its function is as follows. Catalyzes the condensation of iminoaspartate with dihydroxyacetone phosphate to form quinolinate. This chain is Quinolinate synthase, found in Bacillus cereus (strain G9842).